We begin with the raw amino-acid sequence, 350 residues long: Probable V-type proton ATPase subunit d 2 (350 aa).

This sequence belongs to the V-ATPase V0D/AC39 subunit family. In terms of assembly, V-ATPase is a heteromultimeric enzyme made up of two complexes: the ATP-hydrolytic V1 complex and the proton translocation V0 complex. The V1 complex consists of three catalytic AB heterodimers that form a heterohexamer, three peripheral stalks each consisting of EG heterodimers, one central rotor including subunits D and F, and the regulatory subunits C and H. The proton translocation complex V0 consists of the proton transport subunit a, a ring of proteolipid subunits c9c'', rotary subunit d, subunits e and f, and the accessory subunits VhaAC45 and ATP6AP2.

Functionally, subunit of the V0 complex of vacuolar(H+)-ATPase (V-ATPase), a multisubunit enzyme composed of a peripheral complex (V1) that hydrolyzes ATP and a membrane integral complex (V0) that translocates protons. V-ATPase is responsible for acidifying and maintaining the pH of intracellular compartments and in some cell types, is targeted to the plasma membrane, where it is responsible for acidifying the extracellular environment. May play a role in coupling of proton transport and ATP hydrolysis. The chain is Probable V-type proton ATPase subunit d 2 (VhaAC39-2) from Drosophila melanogaster (Fruit fly).